Reading from the N-terminus, the 846-residue chain is Protein kintoun (846 aa).

4 disordered regions span residues 1 to 21 (MSTAAGSRKKHSKLHNEERAD), 377 to 412 (DSGVELHSNSESPVEDDADGYMPETPELETAAPPDP), 581 to 657 (HTSI…DSTI), and 743 to 846 (HDSS…DDEI). Serine 378 is modified (phosphoserine). Residues 399-408 (PETPELETAA) show a composition bias toward low complexity. Basic residues-rich tracts occupy residues 596–612 (LHKKPSKKQRKRNKKQR) and 750–766 (QRKKNQKRRNCKLRAQQ). Residue serine 770 is modified to Phosphoserine. Over residues 821-832 (TRQDHADADAKN) the composition is skewed to basic and acidic residues.

Belongs to the PIH1 family. Kintoun subfamily. As to quaternary structure, interacts with Pp1alpha-96A, Pp1-87B, Pp1-13C and flw.

The protein resides in the cytoplasm. In terms of biological role, required for cytoplasmic pre-assembly of axonemal dyneins, thereby playing a central role in motility in cilia and flagella. Involved in pre-assembly of dynein arm complexes in the cytoplasm before intraflagellar transport loads them for the ciliary compartment. The sequence is that of Protein kintoun from Drosophila pseudoobscura pseudoobscura (Fruit fly).